We begin with the raw amino-acid sequence, 81 residues long: Acyl carrier protein (81 aa).

One can recognise a Carrier domain in the interval Ser4–Val79. The residue at position 39 (Ser39) is an O-(pantetheine 4'-phosphoryl)serine.

Belongs to the acyl carrier protein (ACP) family. In terms of processing, 4'-phosphopantetheine is transferred from CoA to a specific serine of apo-ACP by AcpS. This modification is essential for activity because fatty acids are bound in thioester linkage to the sulfhydryl of the prosthetic group.

It is found in the cytoplasm. It functions in the pathway lipid metabolism; fatty acid biosynthesis. In terms of biological role, carrier of the growing fatty acid chain in fatty acid biosynthesis. This chain is Acyl carrier protein, found in Thermosynechococcus vestitus (strain NIES-2133 / IAM M-273 / BP-1).